The chain runs to 450 residues: UDP-N-acetylmuramoylalanine--D-glutamate ligase (450 aa).

115-121 (GTNGKTT) lines the ATP pocket.

Belongs to the MurCDEF family.

The protein resides in the cytoplasm. It carries out the reaction UDP-N-acetyl-alpha-D-muramoyl-L-alanine + D-glutamate + ATP = UDP-N-acetyl-alpha-D-muramoyl-L-alanyl-D-glutamate + ADP + phosphate + H(+). The protein operates within cell wall biogenesis; peptidoglycan biosynthesis. In terms of biological role, cell wall formation. Catalyzes the addition of glutamate to the nucleotide precursor UDP-N-acetylmuramoyl-L-alanine (UMA). This chain is UDP-N-acetylmuramoylalanine--D-glutamate ligase, found in Lachnospira eligens (strain ATCC 27750 / DSM 3376 / VPI C15-48 / C15-B4) (Eubacterium eligens).